Reading from the N-terminus, the 551-residue chain is RCC1 and BTB domain-containing protein 2 (551 aa).

6 RCC1 repeats span residues 64–115, 117–169, 171–222, 223–274, 276–326, and 328–382; these read NDEI…VLAT, DGEV…VLTS, GEVF…AVVD, TGEV…VLTD, GQIY…AAKT, and GGHV…TVAE. Residues 394 to 457 enclose the BTB domain; sequence ADLKFLVDGK…LYTDNISLSP (64 aa).

As to expression, expressed in testis and heart (at protein level).

Its subcellular location is the cytoplasmic vesicle. The protein resides in the secretory vesicle. It localises to the acrosome. This chain is RCC1 and BTB domain-containing protein 2 (Rcbtb2), found in Mus musculus (Mouse).